Consider the following 508-residue polypeptide: Steroid 17-alpha-hydroxylase/17,20 lyase (508 aa).

Asn202 provides a ligand contact to substrate. Cys442 is a binding site for heme.

This sequence belongs to the cytochrome P450 family. Heme serves as cofactor.

Its subcellular location is the endoplasmic reticulum membrane. It localises to the microsome membrane. It catalyses the reaction a C21-steroid + reduced [NADPH--hemoprotein reductase] + O2 = a 17alpha-hydroxy-C21-steroid + oxidized [NADPH--hemoprotein reductase] + H2O + H(+). The catalysed reaction is progesterone + reduced [NADPH--hemoprotein reductase] + O2 = 17alpha-hydroxyprogesterone + oxidized [NADPH--hemoprotein reductase] + H2O + H(+). The enzyme catalyses pregnenolone + reduced [NADPH--hemoprotein reductase] + O2 = 17alpha-hydroxypregnenolone + oxidized [NADPH--hemoprotein reductase] + H2O + H(+). It carries out the reaction 17alpha-hydroxyprogesterone + reduced [NADPH--hemoprotein reductase] + O2 = androst-4-ene-3,17-dione + acetate + oxidized [NADPH--hemoprotein reductase] + H2O + 2 H(+). It catalyses the reaction 17alpha-hydroxyprogesterone + reduced [NADPH--hemoprotein reductase] + O2 = 16alpha,17alpha-dihydroxyprogesterone + oxidized [NADPH--hemoprotein reductase] + H2O + H(+). The catalysed reaction is 16alpha,17alpha-dihydroxyprogesterone + reduced [NADPH--hemoprotein reductase] + O2 = 6beta,16alpha,17alpha-trihydroxyprogesterone + oxidized [NADPH--hemoprotein reductase] + H2O + H(+). The enzyme catalyses 17alpha-hydroxypregnenolone + reduced [NADPH--hemoprotein reductase] + O2 = 3beta-hydroxyandrost-5-en-17-one + acetate + oxidized [NADPH--hemoprotein reductase] + H2O + 2 H(+). It carries out the reaction 16alpha,17alpha-dihydroxypregnenolone + reduced [NADPH--hemoprotein reductase] + O2 = 3beta,16alpha-dihydroxy-androst-5-en-17-one + acetate + oxidized [NADPH--hemoprotein reductase] + H2O + 2 H(+). It catalyses the reaction 3beta-hydroxyandrost-5-en-17-one + reduced [NADPH--hemoprotein reductase] + O2 = 3beta,16alpha-dihydroxy-androst-5-en-17-one + oxidized [NADPH--hemoprotein reductase] + H2O + H(+). The catalysed reaction is androst-4-ene-3,17-dione + reduced [NADPH--hemoprotein reductase] + O2 = 16alpha-hydroxyandrost-4-ene-3,17-dione + oxidized [NADPH--hemoprotein reductase] + H2O + H(+). Its pathway is steroid hormone biosynthesis. It functions in the pathway steroid biosynthesis; glucocorticoid biosynthesis. Its activity is regulated as follows. Regulated predominantly by intracellular cAMP levels. The 17,20-lyase activity is stimulated by cytochrome b5, which acts as an allosteric effector increasing the Vmax of the lyase activity. A cytochrome P450 monooxygenase involved in corticoid and androgen biosynthesis. Catalyzes 17-alpha hydroxylation of C21 steroids, which is common for both pathways. A second oxidative step, required only for androgen synthesis, involves an acyl-carbon cleavage. The 17-alpha hydroxy intermediates, as part of adrenal glucocorticoids biosynthesis pathway, are precursors of cortisol. Hydroxylates steroid hormones, pregnenolone and progesterone to form 17-alpha hydroxy metabolites, followed by the cleavage of the C17-C20 bond to form C19 steroids, dehydroepiandrosterone (DHEA) and androstenedione. Has 16-alpha hydroxylase activity. Catalyzes 16-alpha hydroxylation of 17-alpha hydroxy pregnenolone, followed by the cleavage of the C17-C20 bond to form 16-alpha-hydroxy DHEA. Also 16-alpha hydroxylates androgens, relevant for estriol synthesis. Mechanistically, uses molecular oxygen inserting one oxygen atom into a substrate, and reducing the second into a water molecule, with two electrons provided by NADPH via cytochrome P450 reductase (CPR; NADPH-ferrihemoprotein reductase). The polypeptide is Steroid 17-alpha-hydroxylase/17,20 lyase (CYP17A1) (Macaca fascicularis (Crab-eating macaque)).